The following is an 88-amino-acid chain: Putative sulfur carrier protein AF_0554 (88 aa).

Catalysis depends on Cys-26, which acts as the Cysteine persulfide intermediate.

The protein belongs to the sulfur carrier protein TusA family.

This chain is Putative sulfur carrier protein AF_0554, found in Archaeoglobus fulgidus (strain ATCC 49558 / DSM 4304 / JCM 9628 / NBRC 100126 / VC-16).